We begin with the raw amino-acid sequence, 758 residues long: MRSVRSSSRTPKPVKRFVFDEDEDLEEIDLDEVDNADFEREDDEEEVLSEPSESPYTSTPKSSKRVNKTRGTKDFFKKDESLQLFRFVLNECRSQKPGRVGRVAKKRVGVNSMKYWERYKREIQGYRLPKQYRYHYSFYSKCFYKVLGLTPEEKVDLYYACEMPVVTDAEKQWLVEQFHVEFDEFGVIIGSDVCTHWDEEHSDSEDDSGKKEEKAREVSRYTEYHDDMMWKFIVDKISEGAQPIIDKHPIWDEFVKLNEENDVISKKSGRNHYDRFRRILVPNLHFMPYDDFTKAVLYERLEYPIPEEYRKILFTTTGADINESGFIEYLPPSTIHQISPIVPIPCHKSNPKFSQLKEPKDLILWSERKKFTPREDSQIWEFVRRKCVDSAGIFVKNDVLRGRGTLFFKDFRNTERKYESITQRFVVLRKLIMDTDYSLKQKLEIYYAISQPVDEDALDAFKSIACLVLNPDGTIRFAISKSFLIGRISDEPAKLEAENYSYVYDLFIFNETFGTAENPEPLCSVSQNRAEKFMLVSQLVFRFISRFEALEDRRIAWITPNAQVAPKEPVPAPSKKKSAFEAYQSSPQTFDTIQRFSTKRPFFCGDNFQIPPKKPFLAEEDVKLEPMEYENSEQIVENAEIKLEPAEELLDAETVTVEEFLMNSYSTAAPSTSTAPAPPKAPVTAPPAPQKSAQLLGKIDFAIGKMRENFDRFLQFAQQNSADLTVVQRYRYDAQMQQMTEKFTKDVSKVLSGDSIKR.

Residues 30–48 (LDEVDNADFEREDDEEEVL) show a composition bias toward acidic residues. The segment at 30-70 (LDEVDNADFEREDDEEEVLSEPSESPYTSTPKSSKRVNKTR) is disordered. A compositionally biased stretch (low complexity) spans 49–61 (SEPSESPYTSTPK). Residues 653 to 666 (ETVTVEEFLMNSYS) carry the GBA motif. Residues 668–690 (AAPSTSTAPAPPKAPVTAPPAPQ) form a disordered region. The span at 676 to 689 (PAPPKAPVTAPPAP) shows a compositional bias: pro residues.

In terms of assembly, interacts (via GBA motif) with guanine nucleotide-binding protein G(o) subunit alpha goa-1 (in GDP-bound form); the interaction leads to activation of goa-1. Expressed in some neurons including the head and tail neurons, HSN and VC, in a subset of glial cells, in the distal tips cells and in the intestine.

Functionally, acts as a non-receptor guanine nucleotide exchange factor which binds to and activates G-protein alpha subunit goa-1. The chain is G-protein alpha subunit activating protein gbas-1 from Caenorhabditis elegans.